Consider the following 199-residue polypeptide: 5'-deoxynucleotidase YfbR (199 aa).

Residues Arg18 to Trp19 and His33 each bind substrate. Residues Val30–Tyr142 enclose the HD domain. 3 residues coordinate a divalent metal cation: His33, His68, and Asp69. Substrate-binding positions include Asp69, Asp77–Thr80, and Asp137. Asp137 lines the a divalent metal cation pocket.

This sequence belongs to the 5DNU family. Homodimer. The cofactor is a divalent metal cation.

It localises to the cytoplasm. The enzyme catalyses a 2'-deoxyribonucleoside 5'-phosphate + H2O = a 2'-deoxyribonucleoside + phosphate. Functionally, catalyzes the strictly specific dephosphorylation of 2'-deoxyribonucleoside 5'-monophosphates. In Salmonella agona (strain SL483), this protein is 5'-deoxynucleotidase YfbR.